The primary structure comprises 131 residues: Small ribosomal subunit protein uS12 (131 aa).

The residue at position 89 (aspartate 89) is a 3-methylthioaspartic acid.

The protein belongs to the universal ribosomal protein uS12 family. In terms of assembly, part of the 30S ribosomal subunit. Contacts proteins S8 and S17. May interact with IF1 in the 30S initiation complex.

With S4 and S5 plays an important role in translational accuracy. Its function is as follows. Interacts with and stabilizes bases of the 16S rRNA that are involved in tRNA selection in the A site and with the mRNA backbone. Located at the interface of the 30S and 50S subunits, it traverses the body of the 30S subunit contacting proteins on the other side and probably holding the rRNA structure together. The combined cluster of proteins S8, S12 and S17 appears to hold together the shoulder and platform of the 30S subunit. The protein is Small ribosomal subunit protein uS12 of Campylobacter concisus (strain 13826).